The following is a 379-amino-acid chain: Succinyl-diaminopimelate desuccinylase (379 aa).

A Zn(2+)-binding site is contributed by His-70. The active site involves Asp-72. Asp-103 is a Zn(2+) binding site. Residue Glu-137 is the Proton acceptor of the active site. Zn(2+) contacts are provided by Glu-138, Glu-166, and His-352.

Belongs to the peptidase M20A family. DapE subfamily. Homodimer. The cofactor is Zn(2+). It depends on Co(2+) as a cofactor.

The enzyme catalyses N-succinyl-(2S,6S)-2,6-diaminopimelate + H2O = (2S,6S)-2,6-diaminopimelate + succinate. The protein operates within amino-acid biosynthesis; L-lysine biosynthesis via DAP pathway; LL-2,6-diaminopimelate from (S)-tetrahydrodipicolinate (succinylase route): step 3/3. Catalyzes the hydrolysis of N-succinyl-L,L-diaminopimelic acid (SDAP), forming succinate and LL-2,6-diaminopimelate (DAP), an intermediate involved in the bacterial biosynthesis of lysine and meso-diaminopimelic acid, an essential component of bacterial cell walls. This is Succinyl-diaminopimelate desuccinylase from Shewanella baltica (strain OS223).